Here is a 186-residue protein sequence, read N- to C-terminus: ADP-ribosylation factor-like protein 8B (186 aa).

Methionine 1 is subject to N-acetylmethionine. The segment at residues 1–19 (MLALISRLLDWFRSLFWKE) is an intramembrane region (note=Mediates targeting to membranes). GTP-binding positions include 29-35 (QYSGKTT), 71-75 (DIGGQ), and 130-133 (NKRD). A Glycyl lysine isopeptide (Lys-Gly) (interchain with G-Cter in ubiquitin) cross-link involves residue lysine 141.

It belongs to the small GTPase superfamily. Arf family. Interacts with tubulin. Interacts with BORCS5; recruits ARL8B to lysosomes. Interacts with VPS41; the interaction mediates the recruitment of the HOPS complex to lysosomes. Interacts (GTP-bound form) with PLEKHM2 (via RUN domain); the interaction is required to recruit the motor protein kinesin-1 on lysosomes. Interacts (GTP-bound form) with PLEKHM1 (via RUN domain); the interaction is required for PLEKHM1 localization to lysosomes and for ARL8B function in delivery and degradation of endocytic and autophagic cargo in lysosomes. PLEKHM1 and PLEKHM2 compete for interaction with ARL8B. Interacts (GTP-bound form) with RUFY1; the interaction is required for RUFY1 endosomal location. When GTP-bound, interacts with RUFY3 and RUFY4, but not with RUFY1, nor RUFY2. Ubiquitinated at Lys-141 by RNF167, leading to its degradation. Ubiquitously expressed.

It localises to the late endosome membrane. It is found in the lysosome membrane. The protein resides in the cytoplasm. The protein localises to the cytoskeleton. Its subcellular location is the spindle. It localises to the cell projection. It is found in the axon. The protein resides in the synapse. The protein localises to the cytolytic granule membrane. Its subcellular location is the early endosome membrane. The catalysed reaction is GTP + H2O = GDP + phosphate + H(+). In terms of biological role, small GTPase which cycles between active GTP-bound and inactive GDP-bound states. In its active state, binds to a variety of effector proteins playing a key role in the regulation of lysosomal positioning which is important for nutrient sensing, natural killer cell-mediated cytotoxicity and antigen presentation. Along with its effectors, orchestrates lysosomal transport and fusion. Localizes specifically to lysosomal membranes and mediates anterograde lysosomal motility by recruiting PLEKHM2, which in turn recruits the motor protein kinesin-1 on lysosomes. Required for lysosomal and cytolytic granule exocytosis. Critical factor involved in NK cell-mediated cytotoxicity. Drives the polarization of cytolytic granules and microtubule-organizing centers (MTOCs) toward the immune synapse between effector NK lymphocytes and target cells. In neurons, mediates the anterograde axonal long-range transport of presynaptic lysosome-related vesicles required for presynaptic biogenesis and synaptic function. Also acts as a regulator of endosome to lysosome trafficking pathways of special significance for host defense. Recruits RUFY1 onto early endosomes regulating endosomes to trans-Golgi network proteins retrieval. Regulates cargo trafficking to lysosomes by binding to PLEKHM1 and recruiting the HOPS subunit VPS41, resulting in functional assembly of the HOPS complex on lysosomal membranes. Plays an important role in cargo delivery to lysosomes for antigen presentation and microbial killing. Directs the intersection of CD1d with lipid antigens in lysosomes, and plays a role in intersecting phagosomes with lysosomes to generate phagolysosomes that kill microbes. Involved in the process of MHC II presentation. Regulates the delivery of antigens to lysosomes and the formation of MHC II-peptide complexes through the recruitment of the HOPS complex to lysosomes allowing the fusion of late endosomes to lysosomes. May play a role in chromosome segregation. (Microbial infection) During Mycobacterium tuberculosis (Mtb) infection, is required for plasma membrane repair by controlling the exocytosis of lysosomes in macrophages. ARL8B secretion pathway is crucial to control the type of cell death of the M.tuberculosis-infected macrophages, distinguishing avirulent from virulent Mtb induced necrotic cell death. Its function is as follows. (Microbial infection) During infection, coronaviruses such as SARS-CoV-2 and the chaperone HSPA5/GRP78 are probably co-released through ARL8B-dependent lysosomal exocytic pathway for unconventional egress. In Homo sapiens (Human), this protein is ADP-ribosylation factor-like protein 8B.